The sequence spans 354 residues: Malate dehydrogenase 1, peroxisomal (354 aa).

The segment at 6–14 (RIARISAHL) is peroxisomal targeting signal PTS2. Residues 49–55 (GAAGGIG) and Asp75 contribute to the NAD(+) site. The substrate site is built by Arg122 and Arg128. NAD(+) contacts are provided by residues Asn135 and 158 to 160 (ISN). Residues Asn160 and Arg194 each contribute to the substrate site. His218 acts as the Proton acceptor in catalysis. NAD(+) is bound at residue Met269.

It belongs to the LDH/MDH superfamily. MDH type 1 family. Homodimer. As to expression, expressed in rosette leaves at low levels.

Its subcellular location is the peroxisome. It carries out the reaction (S)-malate + NAD(+) = oxaloacetate + NADH + H(+). In terms of biological role, catalyzes a reversible NAD-dependent dehydrogenase reaction involved in central metabolism and redox homeostasis between organelle compartments. Peroxisomal NAD-dependent malate dehydrogenase involved in fatty acid beta-oxidation. Reoxidizes NADH from the beta-oxidation and provides NAD for the conversion of fatty acyl-CoA to acetyl-CoA. Does not participate directly in the glyoxylate cycle. Required for maintenance of photosynthetic rates under photorespiratory conditions, and carbon flow during photorespiration. Supplies NADH reductant to the peroxisomal hydroxypyruvate reductase (HPR), which reduces hydroxypyruvate into glycerate in the photorespiratory cycle. The sequence is that of Malate dehydrogenase 1, peroxisomal from Arabidopsis thaliana (Mouse-ear cress).